A 398-amino-acid chain; its full sequence is Cystathionine gamma-lyase (398 aa).

At S50 the chain carries Phosphoserine. Positions 61, 113, and 118 each coordinate substrate. Residue K211 is modified to N6-(pyridoxal phosphate)lysine. E338 serves as a coordination point for substrate.

This sequence belongs to the trans-sulfuration enzymes family. As to quaternary structure, homotetramer. Interacts with CALM in a calcium-dependent manner. It depends on pyridoxal 5'-phosphate as a cofactor.

Its subcellular location is the cytoplasm. The catalysed reaction is L,L-cystathionine + H2O = 2-oxobutanoate + L-cysteine + NH4(+). It carries out the reaction L-homoserine = 2-oxobutanoate + NH4(+). It catalyses the reaction L-selenocystathionine + H2O = L-selenocysteine + 2-oxobutanoate + NH4(+). The enzyme catalyses L-cysteine + H2O = hydrogen sulfide + pyruvate + NH4(+) + H(+). The catalysed reaction is L-homocysteine + H2O = 2-oxobutanoate + hydrogen sulfide + NH4(+) + H(+). Its pathway is amino-acid biosynthesis; L-cysteine biosynthesis; L-cysteine from L-homocysteine and L-serine: step 2/2. Functionally, catalyzes the last step in the trans-sulfuration pathway from L-methionine to L-cysteine in a pyridoxal-5'-phosphate (PLP)-dependent manner, which consists on cleaving the L,L-cystathionine molecule into L-cysteine, ammonia and 2-oxobutanoate. Part of the L-cysteine derived from the trans-sulfuration pathway is utilized for biosynthesis of the ubiquitous antioxidant glutathione. Besides its role in the conversion of L-cystathionine into L-cysteine, it utilizes L-cysteine and L-homocysteine as substrates (at much lower rates than L,L-cystathionine) to produce hydrogen sulfide (H2S). In vitro, it converts two L-cysteine molecules into lanthionine and H2S, and two L-homocysteine molecules to homolanthionine and H2S, which can be particularly relevant under conditions of severe hyperhomocysteinemia. Lanthionine and homolanthionine are structural homologs of L,L-cystathionine that differ by the absence or presence of an extra methylene group, respectively. Acts as a cysteine-protein sulfhydrase by mediating sulfhydration of target proteins: sulfhydration consists of converting -SH groups into -SSH on specific cysteine residues of target proteins such as GAPDH, PTPN1 and NF-kappa-B subunit RELA, thereby regulating their function. By generating the gasotransmitter H2S, it participates in a number of physiological processes such as vasodilation, bone protection, and inflammation. Plays an essential role in myogenesis by contributing to the biogenesis of H2S in skeletal muscle tissue. Can also accept homoserine as substrate. Catalyzes the elimination of selenocystathionine (which can be derived from the diet) to yield selenocysteine, ammonia and 2-oxobutanoate. This is Cystathionine gamma-lyase (Cth) from Rattus norvegicus (Rat).